A 300-amino-acid polypeptide reads, in one-letter code: GTPase Era (300 aa).

One can recognise an Era-type G domain in the interval 6 to 173 (KSGFVAIVGR…MDVLVEQMPE (168 aa)). The G1 stretch occupies residues 14 to 21 (GRPNVGKS). 14-21 (GRPNVGKS) contributes to the GTP binding site. A G2 region spans residues 40 to 44 (QTTRN). The interval 61–64 (DTPG) is G3. Residues 61-65 (DTPGI) and 123-126 (NKID) each bind GTP. The tract at residues 123–126 (NKID) is G4. The interval 152–154 (ISA) is G5. A KH type-2 domain is found at 204–281 (TRDEIPHSVA…YLELWVKVQK (78 aa)).

Belongs to the TRAFAC class TrmE-Era-EngA-EngB-Septin-like GTPase superfamily. Era GTPase family. As to quaternary structure, monomer.

The protein localises to the cytoplasm. It is found in the cell membrane. Its function is as follows. An essential GTPase that binds both GDP and GTP, with rapid nucleotide exchange. Plays a role in 16S rRNA processing and 30S ribosomal subunit biogenesis and possibly also in cell cycle regulation and energy metabolism. This is GTPase Era from Enterococcus faecalis (strain ATCC 700802 / V583).